Consider the following 94-residue polypeptide: Neutrophil defensin 1 (94 aa).

Positions 1-19 are cleaved as a signal peptide; it reads MRTLAILAAILLVALQAQA. Residues 20-64 constitute a propeptide that is removed on maturation; sequence EPLQARADEVAAAPEQIPADNPEVVVSLAWDESLAPKHPGSRKNV. Disulfide bonds link cysteine 66–cysteine 94, cysteine 68–cysteine 83, and cysteine 73–cysteine 93. Position 78 is an ADP-ribosylarginine; by ART1 (arginine 78). Tyrosine 85 is subject to Phosphotyrosine. At arginine 88 the chain carries ADP-ribosylarginine; by ART1.

It belongs to the alpha-defensin family. In terms of assembly, tetramer. Dimer. Interacts with RETN. Post-translationally, ADP-ribosylation drastically reduces cytotoxic and antibacterial activities, and enhances IL8 production.

It localises to the secreted. Effector molecule of the innate immune system that acts via antibiotic-like properties against a broad array of infectious agents including bacteria, fungi, and viruses or by promoting the activation and maturation of some APCs. Interacts with the essential precursor of cell wall synthesis lipid II to inhibit bacterial cell wall synthesis. Inhibits adenovirus infection via inhibition of viral disassembly at the vertex region, thereby restricting the release of internal capsid protein pVI, which is required for endosomal membrane penetration during cell entry. In addition, interaction with adenovirus capsid leads to the redirection of viral particles to TLR4 thereby promoting a NLRP3-mediated inflammasome response and interleukin 1-beta (IL-1beta) release. Induces the production of proinflammatory cytokines including type I interferon (IFN) in plasmacytoid dendritic cells (pDCs) by triggering the degradation of NFKBIA and nuclear translocation of IRF1, both of which are required for activation of pDCs. In Pan troglodytes (Chimpanzee), this protein is Neutrophil defensin 1 (DEFA1).